Consider the following 2863-residue polypeptide: Lipopolysaccharide-responsive and beige-like anchor protein (2863 aa).

3 disordered regions span residues 1-35 (MASEDNRVPSPPPTGDDGGGGGREETPTEGGALSL), 969-1005 (VGSQQPDTKDSPVCPHFTTNGNENSSIEKTSSLESAS), and 1018-1039 (EMKAEQENQELPDEGTLEETLT). N-acetylalanine is present on Ala-2. Phosphoserine occurs at positions 10, 979, and 1003. Residues 985-1005 (FTTNGNENSSIEKTSSLESAS) are compositionally biased toward polar residues. A coiled-coil region spans residues 1006 to 1053 (NIELQTTNTSYEEMKAEQENQELPDEGTLEETLTNETRNADDLEVSSD). The segment covering 1024–1034 (ENQELPDEGTL) has biased composition (acidic residues). Phosphoserine is present on residues Ser-1100, Ser-1135, and Ser-1139. Basic and acidic residues predominate over residues 1161–1176 (PVTEKQTDTETQDSKD). The interval 1161 to 1193 (PVTEKQTDTETQDSKDSGIQTMTASGSSAMSPE) is disordered. The span at 1177–1193 (SGIQTMTASGSSAMSPE) shows a compositional bias: polar residues. A phosphoserine mark is found at Ser-1233, Ser-1247, and Ser-1261. The WD 1 repeat unit spans residues 1301–1343 (STVFRIPEFNWSQMHQRLLTDLLFSIETDIQMWRSHSTKTVMD). Phosphoserine is present on residues Ser-1488 and Ser-1498. Residues 1531-1548 (FLALAVVYFISVLMVSKY) traverse the membrane as a helical segment. A compositionally biased stretch (low complexity) spans 1586-1599 (LTTASVEESESTSS). Disordered stretches follow at residues 1586–1668 (LTTA…KATP) and 1759–1789 (QASDMGGESPGSRSSNAKLPSVPTVDSVSQD). Ser-1605 bears the Phosphoserine mark. Positions 1650 to 1664 (KSPETKNDRGNDLDT) are enriched in basic and acidic residues. Phosphoserine is present on residues Ser-1767, Ser-1770, and Ser-2064. The span at 1769–1789 (GSRSSNAKLPSVPTVDSVSQD) shows a compositional bias: polar residues. Positions 2073 to 2181 (NLAGPVSLST…TVKKVVNYLP (109 aa)) constitute a BEACH-type PH domain. The BEACH domain occupies 2200-2489 (ASPRQLFKAS…QLLIEPHPPR (290 aa)). At Ser-2496 the chain carries Phosphoserine. WD repeat units lie at residues 2591–2633 (DQSI…LIQV), 2636–2679 (GHWD…SGIG), 2695–2735 (GHDY…RTLE), 2777–2816 (ETDDNIRAIQLSRDGQYLLTGGDRGVVVVRQVSDLKQLFA), and 2819–2858 (GCDAGIRAMALSYDQRCIISGMASGSIVLFYNDFNRWHHE).

In terms of assembly, interacts with TOM1 and TOLLIP. In terms of tissue distribution, ubiquitous.

It localises to the cell membrane. Its subcellular location is the endoplasmic reticulum membrane. It is found in the golgi apparatus. The protein localises to the trans-Golgi network membrane. The protein resides in the lysosome membrane. Involved in coupling signal transduction and vesicle trafficking to enable polarized secretion and/or membrane deposition of immune effector molecules. Involved in phagophore growth during mitophagy by regulating ATG9A trafficking to mitochondria. This is Lipopolysaccharide-responsive and beige-like anchor protein from Homo sapiens (Human).